Reading from the N-terminus, the 198-residue chain is Cyclin-dependent kinase inhibitor 1B (198 aa).

The segment covering 1–11 has biased composition (polar residues); the sequence is MSNVRVSNGSP. A disordered region spans residues 1 to 22; the sequence is MSNVRVSNGSPSLERMDARQAE. Ser10 carries the post-translational modification Phosphoserine; by UHMK1. The interaction with CDK2 stretch occupies residues 51-91; sequence DMEEASQRKWNFDFQNHKPLEGKYEWQEVEKGSLPEFYYRP. Tyr74 carries the post-translational modification Phosphotyrosine; by SRC. The disordered stretch occupies residues 87–198; it reads FYYRPPRPPK…KKPGLRRRQT (112 aa). Tyr88 carries the phosphotyrosine; by ABL, LYN and SRC modification. Phosphotyrosine is present on Tyr89. Residues 104–113 show a composition bias toward polar residues; that stretch reads QESQDVSGNR. The span at 126-137 shows a compositional bias: basic and acidic residues; the sequence is EDTHLVDQKTDT. A Nuclear localization signal motif is present at residues 153 to 169; sequence KRPATDDSSPQNKRANR. Position 157 is a phosphothreonine; by CaMK1, PKB/AKT1 and PIM1 (Thr157). Phosphothreonine is present on Thr170. A compositionally biased stretch (polar residues) spans 175–186; sequence SDGSPNAGSVEQ. Thr187 carries the post-translational modification Phosphothreonine; by PKB/AKT1, CDK1 and CDK2. Phosphothreonine; by CaMK1, PKB/AKT1, RPS6KA1, RPS6KA3 and PIM1 is present on Thr198.

The protein belongs to the CDI family. In terms of assembly, forms a ternary complex composed of CCNE1, CDK2 and CDKN1B. Interacts directly with CCNE1; the interaction is inhibited by CDK2-dependent phosphorylation on Thr-187. Interacts with COPS5, subunit of the COP9 signalosome complex; the interaction leads to CDKN1B degradation. Interacts with NUP50; the interaction leads to nuclear import and degradation of phosphorylated CDKN1B. Interacts with CCND1 and SNX6. Interacts (Thr-198-phosphorylated form) with 14-3-3 proteins, binds strongly YWHAQ, weakly YWHAE and YWHAH, but not YWHAB nor YWHAZ; the interaction with YWHAQ results in translocation to the cytoplasm. Interacts with AKT1 and LYN; the interactions lead to cytoplasmic mislocation, phosphorylation of CDKN1B and inhibition of cell cycle arrest. Forms a ternary complex with CCNA2 and CDK2; CDKN1B inhibits the kinase activity of CDK2 through conformational rearrangements. Interacts (unphosphorylated form) with CDK2. Forms a complex with CDK2 and SPDYA, but does not directly interact with SPDYA. Forms a ternary complex composed of cyclin D, CDK4 and CDKN1B. Interacts (phosphorylated on Tyr-88 and Tyr-89) with CDK4; the interaction is required for cyclin D and CDK4 complex assembly, induces nuclear translocation and activates the CDK4 kinase activity. Interacts with GRB2. Interacts with PIM1. Identified in a complex with SKP1, SKP2 and CKS1B. Interacts with UHMK1; the interaction leads to cytoplasmic mislocation, phosphorylation of CDKN1B and inhibition of cell cycle arrest. Also interacts with CDK1. Dephosphorylated on Thr-187 by PPM1H, leading to CDKN1B stability. In terms of processing, phosphorylated; phosphorylation occurs on serine, threonine and tyrosine residues. Phosphorylation on Ser-10 is the major site of phosphorylation in resting cells, takes place at the G(0)-G(1) phase and leads to protein stability. Phosphorylation on other sites is greatly enhanced by mitogens, growth factors, cMYC and in certain cancer cell lines. The phosphorylated form found in the cytoplasm is inactivate. Phosphorylation on Thr-198 is required for interaction with 14-3-3 proteins. Phosphorylation on Thr-187, by CDK1 and CDK2 leads to protein ubiquitination and proteasomal degradation. Tyrosine phosphorylation promotes this process. Phosphorylation by PKB/AKT1 can be suppressed by LY294002, an inhibitor of the catalytic subunit of PI3K. Phosphorylation on Tyr-88 and Tyr-89 has no effect on binding CDK2, but is required for binding CDK4. Dephosphorylated on tyrosine residues by G-CSF. Dephosphorylated on Thr-187 by PPM1H, leading to CDKN1B stability. Post-translationally, ubiquitinated; in the cytoplasm by the KPC complex (composed of RNF123/KPC1 and UBAC1/KPC2) and, in the nucleus, by SCF(SKP2). The latter requires prior phosphorylation on Thr-187. Ubiquitinated; by a TRIM21-containing SCF(SKP2)-like complex; leads to its degradation. Subject to degradation in the lysosome. Interaction with SNX6 promotes lysosomal degradation.

It localises to the nucleus. The protein resides in the cytoplasm. Its subcellular location is the endosome. Its function is as follows. Important regulator of cell cycle progression. Inhibits the kinase activity of CDK2 bound to cyclin A, but has little inhibitory activity on CDK2 bound to SPDYA. Involved in G1 arrest. Potent inhibitor of cyclin E- and cyclin A-CDK2 complexes. Forms a complex with cyclin type D-CDK4 complexes and is involved in the assembly, stability, and modulation of CCND1-CDK4 complex activation. Acts either as an inhibitor or an activator of cyclin type D-CDK4 complexes depending on its phosphorylation state and/or stoichometry. This Felis catus (Cat) protein is Cyclin-dependent kinase inhibitor 1B (CDKN1B).